Consider the following 633-residue polypeptide: Probable extracellular metalloproteinase 3 (633 aa).

The first 18 residues, 1–18, serve as a signal peptide directing secretion; sequence MHGLLLAGLLALPMNVLA. A propeptide spanning residues 19-246 is cleaved from the precursor; it reads HPAEQHASNV…VHNVVDYVAS (228 aa). The N-linked (GlcNAc...) asparagine glycan is linked to Asn-410. Residue His-429 coordinates Zn(2+). The active site involves Glu-430. Position 433 (His-433) interacts with Zn(2+). N-linked (GlcNAc...) asparagine glycosylation is found at Asn-480 and Asn-622.

This sequence belongs to the peptidase M36 family. Zn(2+) serves as cofactor.

The protein resides in the secreted. Functionally, secreted metalloproteinase probably acting as a virulence factor. In Trichophyton verrucosum (strain HKI 0517), this protein is Probable extracellular metalloproteinase 3 (MEP3).